We begin with the raw amino-acid sequence, 155 residues long: 6,7-dimethyl-8-ribityllumazine synthase (155 aa).

Residues Phe24, 58-60, and 82-84 contribute to the 5-amino-6-(D-ribitylamino)uracil site; these read AFE and VII. 87–88 serves as a coordination point for (2S)-2-hydroxy-3-oxobutyl phosphate; that stretch reads ST. His90 serves as the catalytic Proton donor. Phe115 is a 5-amino-6-(D-ribitylamino)uracil binding site. A (2S)-2-hydroxy-3-oxobutyl phosphate-binding site is contributed by Arg129.

The protein belongs to the DMRL synthase family.

The catalysed reaction is (2S)-2-hydroxy-3-oxobutyl phosphate + 5-amino-6-(D-ribitylamino)uracil = 6,7-dimethyl-8-(1-D-ribityl)lumazine + phosphate + 2 H2O + H(+). It participates in cofactor biosynthesis; riboflavin biosynthesis; riboflavin from 2-hydroxy-3-oxobutyl phosphate and 5-amino-6-(D-ribitylamino)uracil: step 1/2. Functionally, catalyzes the formation of 6,7-dimethyl-8-ribityllumazine by condensation of 5-amino-6-(D-ribitylamino)uracil with 3,4-dihydroxy-2-butanone 4-phosphate. This is the penultimate step in the biosynthesis of riboflavin. The protein is 6,7-dimethyl-8-ribityllumazine synthase of Chlorobium phaeobacteroides (strain DSM 266 / SMG 266 / 2430).